We begin with the raw amino-acid sequence, 81 residues long: Omega-conotoxin-like 3 (81 aa).

An N-terminal signal peptide occupies residues 1 to 22 (MKLTCMMIVAVLFLTASIFITA). Positions 23 to 51 (DNSRNGIENLPRMRRHEMKKPKASKLNKR) are excised as a propeptide. 3 disulfide bridges follow: cysteine 53-cysteine 71, cysteine 60-cysteine 75, and cysteine 70-cysteine 79.

Belongs to the conotoxin O1 superfamily. As to expression, expressed by the venom duct.

It localises to the secreted. Functionally, omega-conotoxins act at presynaptic membranes, they bind and block voltage-gated calcium channels (Cav). The polypeptide is Omega-conotoxin-like 3 (Conus imperialis (Imperial cone)).